The following is a 193-amino-acid chain: NADH-quinone oxidoreductase subunit B (193 aa).

Positions 72, 73, 137, and 167 each coordinate [4Fe-4S] cluster.

Belongs to the complex I 20 kDa subunit family. NDH-1 is composed of 14 different subunits. Subunits NuoB, C, D, E, F, and G constitute the peripheral sector of the complex. The cofactor is [4Fe-4S] cluster.

It localises to the cell inner membrane. It catalyses the reaction a quinone + NADH + 5 H(+)(in) = a quinol + NAD(+) + 4 H(+)(out). NDH-1 shuttles electrons from NADH, via FMN and iron-sulfur (Fe-S) centers, to quinones in the respiratory chain. The immediate electron acceptor for the enzyme in this species is believed to be ubiquinone. Couples the redox reaction to proton translocation (for every two electrons transferred, four hydrogen ions are translocated across the cytoplasmic membrane), and thus conserves the redox energy in a proton gradient. In Rhizobium rhizogenes (strain K84 / ATCC BAA-868) (Agrobacterium radiobacter), this protein is NADH-quinone oxidoreductase subunit B.